Here is a 221-residue protein sequence, read N- to C-terminus: uncharacterized protein (221 aa).

The CUE domain occupies 20-63; the sequence is DFDRAMLDFQAMFPSLSNSHIEYVLRKYDGDVSATINELLYDNT. The tract at residues 131–194 is disordered; the sequence is EEKKKKSCSD…GPYIGEGEVK (64 aa). The segment covering 156–166 has biased composition (low complexity); that stretch reads KNSKNSKISVN. Residues 169 to 183 show a composition bias toward basic and acidic residues; the sequence is KKLEPRRRSDEDRVP.

This is an uncharacterized protein from Caenorhabditis elegans.